Here is a 328-residue protein sequence, read N- to C-terminus: 4-hydroxythreonine-4-phosphate dehydrogenase (328 aa).

Histidine 133 and threonine 134 together coordinate substrate. A divalent metal cation-binding residues include histidine 163, histidine 208, and histidine 263. Residues lysine 271, asparagine 280, and arginine 289 each contribute to the substrate site.

The protein belongs to the PdxA family. As to quaternary structure, homodimer. It depends on Zn(2+) as a cofactor. Mg(2+) serves as cofactor. Requires Co(2+) as cofactor.

The protein localises to the cytoplasm. It carries out the reaction 4-(phosphooxy)-L-threonine + NAD(+) = 3-amino-2-oxopropyl phosphate + CO2 + NADH. Its pathway is cofactor biosynthesis; pyridoxine 5'-phosphate biosynthesis; pyridoxine 5'-phosphate from D-erythrose 4-phosphate: step 4/5. In terms of biological role, catalyzes the NAD(P)-dependent oxidation of 4-(phosphooxy)-L-threonine (HTP) into 2-amino-3-oxo-4-(phosphooxy)butyric acid which spontaneously decarboxylates to form 3-amino-2-oxopropyl phosphate (AHAP). The protein is 4-hydroxythreonine-4-phosphate dehydrogenase of Chromobacterium violaceum (strain ATCC 12472 / DSM 30191 / JCM 1249 / CCUG 213 / NBRC 12614 / NCIMB 9131 / NCTC 9757 / MK).